Here is a 192-residue protein sequence, read N- to C-terminus: Signal peptidase complex catalytic subunit sec11 (192 aa).

The Cytoplasmic segment spans residues 1–18 (MLSFLSSNLSSTRQSLAQ). The chain crosses the membrane as a helical; Signal-anchor for type II membrane protein span at residues 19-39 (VLNFALVLSTAFMLWKGLSVF). The Lumenal portion of the chain corresponds to 40–192 (TASSSPIVVV…GLMVILQREQ (153 aa)). Catalysis depends on charge relay system residues serine 53, histidine 92, and aspartate 133. Residues 177-188 (VLLGIMGLMVIL) form a C-terminal short (CTS) helix region.

It belongs to the peptidase S26B family. As to quaternary structure, component of the signal peptidase complex (SPC) composed of a catalytic subunit SEC11 and three accessory subunits SPC1, SPC2 and SPC3. The complex induces a local thinning of the ER membrane which is used to measure the length of the signal peptide (SP) h-region of protein substrates. This ensures the selectivity of the complex towards h-regions shorter than 18-20 amino acids. SPC associates with the translocon complex.

The protein resides in the endoplasmic reticulum membrane. The catalysed reaction is Cleavage of hydrophobic, N-terminal signal or leader sequences from secreted and periplasmic proteins.. Catalytic component of the signal peptidase complex (SPC) which catalyzes the cleavage of N-terminal signal sequences from nascent proteins as they are translocated into the lumen of the endoplasmic reticulum. Specifically cleaves N-terminal signal peptides that contain a hydrophobic alpha-helix (h-region) shorter than 18-20 amino acids. This is Signal peptidase complex catalytic subunit sec11 (sec11) from Aspergillus clavatus (strain ATCC 1007 / CBS 513.65 / DSM 816 / NCTC 3887 / NRRL 1 / QM 1276 / 107).